A 428-amino-acid polypeptide reads, in one-letter code: Peptidase B (428 aa).

The Mn(2+) site is built by lysine 195 and aspartate 200. Lysine 207 is an active-site residue. The Mn(2+) site is built by aspartate 218, aspartate 277, and glutamate 279. Arginine 281 is an active-site residue.

The protein belongs to the peptidase M17 family. Homohexamer. The cofactor is Mn(2+).

The protein localises to the cytoplasm. The catalysed reaction is Release of an N-terminal amino acid, Xaa, from a peptide or arylamide. Xaa is preferably Glu or Asp but may be other amino acids, including Leu, Met, His, Cys and Gln.. Its function is as follows. Probably plays an important role in intracellular peptide degradation. The chain is Peptidase B from Klebsiella pneumoniae (strain 342).